The primary structure comprises 138 residues: von Willebrand factor C domain-containing protein 2-like (138 aa).

A signal peptide spans 1 to 21; the sequence is MALHIHEACILLLVIPGLVTS. Residues 51–110 enclose the VWFC domain; it reads KGCVDDSGFVYKLGERFFPGHSNCPCVCALDGPVCDQPECPKIHPKCTKVEHNGCCPECK.

In terms of assembly, peripherally associated with AMPAR complex. AMPAR complex consists of an inner core made of 4 pore-forming GluA/GRIA proteins (GRIA1, GRIA2, GRIA3 and GRIA4) and 4 major auxiliary subunits arranged in a twofold symmetry. One of the two pairs of distinct binding sites is occupied either by CNIH2, CNIH3 or CACNG2, CACNG3. The other harbors CACNG2, CACNG3, CACNG4, CACNG8 or GSG1L. This inner core of AMPAR complex is complemented by outer core constituents binding directly to the GluA/GRIA proteins at sites distinct from the interaction sites of the inner core constituents. Outer core constituents include at least PRRT1, PRRT2, CKAMP44/SHISA9, FRRS1L and NRN1. The proteins of the inner and outer core serve as a platform for other, more peripherally associated AMPAR constituents, including VWC2L. Alone or in combination, these auxiliary subunits control the gating and pharmacology of the AMPAR complex and profoundly impact their biogenesis and protein processing.

The protein localises to the secreted. It localises to the synapse. Functionally, may play a role in neurogenesis. May play a role in bone differentiation and matrix mineralization. The protein is von Willebrand factor C domain-containing protein 2-like (VWC2L) of Macaca fascicularis (Crab-eating macaque).